Here is a 260-residue protein sequence, read N- to C-terminus: 23S rRNA (guanosine-2'-O-)-methyltransferase RlmB (260 aa).

S-adenosyl-L-methionine contacts are provided by G197, I217, and L226.

This sequence belongs to the class IV-like SAM-binding methyltransferase superfamily. RNA methyltransferase TrmH family. RlmB subfamily.

The protein resides in the cytoplasm. The catalysed reaction is guanosine(2251) in 23S rRNA + S-adenosyl-L-methionine = 2'-O-methylguanosine(2251) in 23S rRNA + S-adenosyl-L-homocysteine + H(+). Its function is as follows. Specifically methylates the ribose of guanosine 2251 in 23S rRNA. The polypeptide is 23S rRNA (guanosine-2'-O-)-methyltransferase RlmB (Nitrosomonas europaea (strain ATCC 19718 / CIP 103999 / KCTC 2705 / NBRC 14298)).